The primary structure comprises 826 residues: MAIYYKFKSARDYDTISMDGPFITVGLLKEKIYETKHLGSGKDLDIVISNAQTNEEYLDEAMLIPKNTSVLIRRVPGRPRIRIITREEPRVEDKVENVQADMNNVITADASPVEDEFDEFGNDLYSIPDAPAVHSNNLCHDSAPADDEETKLKALIDTPALDWHQQGADSFGPGRGYGRGMAGRMGGRGFGMERTTPPPGYVCHRCNVSGHFIQHCSTNGNPNFDVKRVKPPTGIPKSMLMATPNGSYSLPSGAVAVLKPNEDAFEKEMEGLTSTTRSVGEFPPELKCPLCKEVMRDAALASKCCLKSYCDKCIRDHIIAKSMCVCGATHVLADDLLPNKTLRDTINRILESGNSSAENAGSMCQVQDMESVRCPPPKALSPTTSAASGGEKKPAPSNNNETSTLKPSIEIAEITSAWASAEIVKVEKPVDASANIQGSSNGKEAAVSQLNTQPPKEEMPQQVASGEQGKRKKKKPRMSGTDLAGPDYMMPMGPGPGNQYFNGFQPGFNGVQHGFNGVQPGFNGFHHGFNGFPGPFPGAMPPFVGYGFGGVIHPDPFAAQGFGFPNIPPPYRDLAEMGNRMNLQHPIMGREEFEAKKTEMKRKRENEIRRSEGGNVVRDSEKSRIMNNSAVTSSPVKPKSRQGPPPPISSDYDRRRRSDRSSPERQSSRRFTSPPRSSSRKSERDRHHDLDSEHDRRRDRPRETDRKHRKRSEKSSSDPTVEIDDNNKSNVFTRISFPEESSGKQRKTSKSSPAPPESSVAPVSSGRRHHSRREREMVEYDSSDDEDRHFKRKPSRYKRSPSVAPSDAGDEHFRHSKRSKGERARA.

The region spanning 3–76 (IYYKFKSARD…NTSVLIRRVP (74 aa)) is the DWNN domain. The CCHC-type zinc-finger motif lies at 203–216 (CHRCNVSGHFIQHC). Ser278 carries the post-translational modification Phosphoserine. The segment at 288–326 (CPLCKEVMRDAALASKCCLKSYCDKCIRDHIIAKSMCVC) adopts an RING-type; degenerate zinc-finger fold. Composition is skewed to polar residues over residues 356–365 (SAENAGSMCQ), 396–406 (PSNNNETSTLK), and 435–454 (NIQG…NTQP). Disordered stretches follow at residues 356–406 (SAEN…STLK), 435–488 (NIQG…GPDY), and 585–826 (HPIM…RARA). Phosphoserine is present on Ser397. A compositionally biased stretch (basic and acidic residues) spans 588-624 (MGREEFEAKKTEMKRKRENEIRRSEGGNVVRDSEKSR). Polar residues predominate over residues 625–635 (IMNNSAVTSSP). The span at 651 to 667 (DYDRRRRSDRSSPERQS) shows a compositional bias: basic and acidic residues. Short sequence motifs (nuclear localization signal) lie at residues 668–675 (SRRFTSPP) and 695–702 (DRRRDRPR). A compositionally biased stretch (basic and acidic residues) spans 680 to 706 (RKSERDRHHDLDSEHDRRRDRPRETDR). Residues 790–799 (FKRKPSRYKR) show a composition bias toward basic residues. Ser800 carries the post-translational modification Phosphoserine. Residues 809–826 (GDEHFRHSKRSKGERARA) are compositionally biased toward basic and acidic residues.

Interacts with PRMT13/PRMT4B in the nucleus. Expressed constitutively in both shoot and root tissues.

It localises to the nucleus. The enzyme catalyses S-ubiquitinyl-[E2 ubiquitin-conjugating enzyme]-L-cysteine + [acceptor protein]-L-lysine = [E2 ubiquitin-conjugating enzyme]-L-cysteine + N(6)-ubiquitinyl-[acceptor protein]-L-lysine.. Functionally, E3 ubiquitin ligase acting as a negative regulator of oxidative stress tolerance, probably by mediating 26S proteasome-mediated degradation of PRMT13/PRMT4B, thus preventing APX1 and GPX1 accumulation via the reduction of histone H3 methylation (H3R17me2a). Confers sensitivity to cadmium CdCl(2) and salt NaCl stresses. This is E3 ubiquitin ligase PARAQUAT TOLERANCE 3 from Arabidopsis thaliana (Mouse-ear cress).